The following is a 599-amino-acid chain: Sulfite reductase [NADPH] flavoprotein alpha-component (599 aa).

Residues 64–202 (ITIISASQTG…AASEWRARVV (139 aa)) form the Flavodoxin-like domain. FMN is bound by residues 70-75 (SQTGNA), 117-120 (STQG), and 153-162 (LGDSSYEFFC). An FAD-binding FR-type domain is found at 234 to 448 (DAPLVASLSV…IEHNDNFRLP (215 aa)). Residues threonine 322, alanine 356, 386-389 (RLYS), 404-406 (TVG), tyrosine 410, and 419-422 (GGAS) contribute to the FAD site. Residues 519-520 (SR), 525-529 (KVYVQ), and aspartate 561 each bind NADP(+). Residue tyrosine 599 participates in FAD binding.

This sequence belongs to the NADPH-dependent sulphite reductase flavoprotein subunit CysJ family. It in the N-terminal section; belongs to the flavodoxin family. In the C-terminal section; belongs to the flavoprotein pyridine nucleotide cytochrome reductase family. As to quaternary structure, alpha(8)-beta(8). The alpha component is a flavoprotein, the beta component is a hemoprotein. FAD serves as cofactor. The cofactor is FMN.

It carries out the reaction hydrogen sulfide + 3 NADP(+) + 3 H2O = sulfite + 3 NADPH + 4 H(+). The protein operates within sulfur metabolism; hydrogen sulfide biosynthesis; hydrogen sulfide from sulfite (NADPH route): step 1/1. Its function is as follows. Component of the sulfite reductase complex that catalyzes the 6-electron reduction of sulfite to sulfide. This is one of several activities required for the biosynthesis of L-cysteine from sulfate. The flavoprotein component catalyzes the electron flow from NADPH -&gt; FAD -&gt; FMN to the hemoprotein component. In Escherichia coli (strain ATCC 8739 / DSM 1576 / NBRC 3972 / NCIMB 8545 / WDCM 00012 / Crooks), this protein is Sulfite reductase [NADPH] flavoprotein alpha-component.